Reading from the N-terminus, the 302-residue chain is Sulfate adenylyltransferase subunit 2 (302 aa).

It belongs to the PAPS reductase family. CysD subfamily. Heterodimer composed of CysD, the smaller subunit, and CysN.

The enzyme catalyses sulfate + ATP + H(+) = adenosine 5'-phosphosulfate + diphosphate. Its pathway is sulfur metabolism; hydrogen sulfide biosynthesis; sulfite from sulfate: step 1/3. With CysN forms the ATP sulfurylase (ATPS) that catalyzes the adenylation of sulfate producing adenosine 5'-phosphosulfate (APS) and diphosphate, the first enzymatic step in sulfur assimilation pathway. APS synthesis involves the formation of a high-energy phosphoric-sulfuric acid anhydride bond driven by GTP hydrolysis by CysN coupled to ATP hydrolysis by CysD. The chain is Sulfate adenylyltransferase subunit 2 from Xanthomonas axonopodis pv. citri (strain 306).